The chain runs to 154 residues: MGVQKHEQEITSSVPAEKMFHGLILDIDNILPKAAPGAYKNVEIKGDGGVGTIKHITLPDGGPVTTMTLRTDGLDKKGFTIDYSVIDGDVLMGFIDKIENHLSVVPTADGGSTTKTTAIFHTKGDAVVPEENIKYAEAQNTMLFKAVEAYLIAN.

The protein belongs to the BetVI family. Expressed in roots.

This is Dau c 1 isoallergen Dau c 1.0301 from Daucus carota (Wild carrot).